The following is a 309-amino-acid chain: Zinc finger CCCH domain-containing protein 31 (309 aa).

The interval 1–36 is disordered; it reads MEGAGAARKRSRPDTANGGAAGGKRSRETESFQTGL. 2 C3H1-type zinc fingers span residues 37–65 and 103–131; these read SSKL…HFVP and SGKT…HGER. Positions 86–106 are disordered; sequence ARAPMDHAAGGNSHPASSGKT. One can recognise a KH domain in the interval 175–239; sequence SATAKISVDA…DQIKQASNMV (65 aa). The segment at 249-273 is disordered; sequence STPAKKPAGSAAGAAPAGRGGPGGR. Residues 251 to 265 are compositionally biased toward low complexity; that stretch reads PAKKPAGSAAGAAPA. The C3H1-type 3 zinc-finger motif lies at 275–302; it reads NYKTKLCENFVKGTCTFGDRCHFAHGEN.

This chain is Zinc finger CCCH domain-containing protein 31, found in Oryza sativa subsp. japonica (Rice).